The chain runs to 150 residues: Glycophorin-A (150 aa).

An N-terminal signal peptide occupies residues 1-19 (MYGKIIFVLLLSEIVSISA). Over 20–91 (LSTTEVAMHT…QLAHHFSEPE (72 aa)) the chain is Extracellular. O-linked (GalNAc...) serine glycosylation occurs at S21. O-linked (GalNAc...) threonine glycans are attached at residues T22, T23, and T29. O-linked (GalNAc...) serine glycosylation is present at S30. O-linked (GalNAc...) threonine glycosylation occurs at T31. An O-linked (GalNAc...) serine glycan is attached at S32. O-linked (GalNAc...) threonine glycosylation occurs at T36. O-linked (GalNAc...) serine glycosylation is found at S38 and S41. O-linked (GalNAc...) threonine glycosylation is present at T44. The N-linked (GlcNAc...) asparagine glycan is linked to N45. O-linked (GalNAc...) threonine glycosylation is found at T52 and T56. S63 and S66 each carry an O-linked (GalNAc...) serine glycan. An O-linked (GalNAc...) threonine glycan is attached at T69. A helical transmembrane segment spans residues 92-114 (ITLIIFGVMAGVIGTILLISYGI). Topologically, residues 115-150 (RRLIKKSPSDVKPLPSPDTDVPLSSVEIENPETSDQ) are cytoplasmic. A disordered region spans residues 121 to 150 (SPSDVKPLPSPDTDVPLSSVEIENPETSDQ). Position 133 is a phosphothreonine (T133). S138 and S148 each carry phosphoserine.

It belongs to the glycophorin A family. As to quaternary structure, homodimer. Component of the ankyrin-1 complex in the erythrocyte, composed of ANK1, RHCE, RHAG, SLC4A1, EPB42, GYPA, GYPB and AQP1. Interacts with SLC4A1; a GYPA monomer is bound at each end of the SLC4A1 dimer forming a heterotetramer. In terms of assembly, (Microbial infection) Interacts with Streptococcus gordonii hsa protein. (Microbial infection) Interacts (in a sialic acid-independent manner) with P.falciparum MSP1 subunit p83. In terms of processing, the major O-linked glycan are NeuAc-alpha-(2-3)-Gal-beta-(1-3)-[NeuAc-alpha-(2-6)]-GalNAcOH (about 78 %) and NeuAc-alpha-(2-3)-Gal-beta-(1-3)-GalNAcOH (17 %). Minor O-glycans (5 %) include NeuAc-alpha-(2-3)-Gal-beta-(1-3)-[NeuAc-alpha-(2-6)]-GalNAcOH NeuAc-alpha-(2-8)-NeuAc-alpha-(2-3)-Gal-beta-(1-3)-GalNAcOH. About 1% of all O-linked glycans carry blood group A, B and H determinants. They derive from a type-2 precursor core structure, Gal-beta-(1,3)-GlcNAc-beta-1-R, and the antigens are synthesized by addition of fucose (H antigen-specific) and then N-acetylgalactosamine (A antigen-specific) or galactose (B antigen-specific). Specifically O-linked-glycans are NeuAc-alpha-(2-3)-Gal-beta-(1-3)-GalNAcOH-(6-1)-GlcNAc-beta-(4-1)-[Fuc-alpha-(1-2)]-Gal-beta-(3-1)-GalNAc-alpha (about 1%, B antigen-specific) and NeuAc-alpha-(2-3)-Gal-beta-(1-3)-GalNAcOH-(6-1)-GlcNAc-beta-(4-1)-[Fuc-alpha-(1-2)]-Gal-beta (1 %, O antigen-, A antigen- and B antigen-specific).

It localises to the cell membrane. Functionally, component of the ankyrin-1 complex, a multiprotein complex involved in the stability and shape of the erythrocyte membrane. Glycophorin A is the major intrinsic membrane protein of the erythrocyte. The N-terminal glycosylated segment, which lies outside the erythrocyte membrane, has MN blood group receptors. Appears to be important for the function of SLC4A1 and is required for high activity of SLC4A1. May be involved in translocation of SLC4A1 to the plasma membrane. Its function is as follows. (Microbial infection) Appears to be a receptor for Hepatitis A virus (HAV). (Microbial infection) Receptor for P.falciparum erythrocyte-binding antigen 175 (EBA-175); binding of EBA-175 is dependent on sialic acid residues of the O-linked glycans. This Homo sapiens (Human) protein is Glycophorin-A.